The sequence spans 381 residues: E3 ubiquitin-protein ligase RNF13 (381 aa).

The signal sequence occupies residues 1–34 (MLLSIGMLMLSATQVYTILTVQLFAFLNLLPVEA). At 35–182 (DILAYNFENA…VPEFSLPLEY (148 aa)) the chain is on the lumenal side. A PA domain is found at 65–160 (KGFLINSKPE…GESSANSLKD (96 aa)). Residue N88 is glycosylated (N-linked (GlcNAc...) asparagine). Residues 183-203 (YLIPFLIIVGICLILIVIFMI) form a helical membrane-spanning segment. Residues 204 to 381 (TKFVQDRHRA…ERDYNIANTV (178 aa)) are Cytoplasmic-facing. The RING-type; atypical zinc finger occupies 240 to 282 (CAICLDEYEDGDKLRILPCSHAYHCKCVDPWLTKTKKTCPVCK). The disordered stretch occupies residues 285 to 381 (VVPSQGDSDS…ERDYNIANTV (97 aa)). Acidic residues-rich tracts occupy residues 292–304 (SDSD…EENE) and 339–357 (SDYE…AENE).

Interacts with ERN1. Post-translationally, autoubiquitinated. In terms of tissue distribution, widely expressed (at protein level). In normal pancreas, expressed in islets, but not in ducts, nor in acini (at protein level).

Its subcellular location is the endoplasmic reticulum membrane. It localises to the late endosome membrane. It is found in the lysosome membrane. The protein resides in the nucleus inner membrane. It carries out the reaction S-ubiquitinyl-[E2 ubiquitin-conjugating enzyme]-L-cysteine + [acceptor protein]-L-lysine = [E2 ubiquitin-conjugating enzyme]-L-cysteine + N(6)-ubiquitinyl-[acceptor protein]-L-lysine.. The protein operates within protein modification; protein ubiquitination. In terms of biological role, E3 ubiquitin-protein ligase that regulates cell proliferation. Involved in apoptosis regulation. Mediates ER stress-induced activation of JNK signaling pathway and apoptosis by promoting ERN1 activation and splicing of XBP1 mRNA. Also involved in protein trafficking and localization. This is E3 ubiquitin-protein ligase RNF13 from Homo sapiens (Human).